We begin with the raw amino-acid sequence, 45 residues long: Peroxidase 3 (45 aa).

This sequence belongs to the peroxidase family. Classical plant (class III) peroxidase subfamily. It depends on heme b as a cofactor. Ca(2+) serves as cofactor.

Its subcellular location is the secreted. It carries out the reaction 2 a phenolic donor + H2O2 = 2 a phenolic radical donor + 2 H2O. Functionally, removal of H(2)O(2), oxidation of toxic reductants, biosynthesis and degradation of lignin, suberization, auxin catabolism, response to environmental stresses such as wounding, pathogen attack and oxidative stress. These functions might be dependent on each isozyme/isoform in each plant tissue. This is Peroxidase 3 from Capsicum annuum (Capsicum pepper).